The primary structure comprises 206 residues: Large ribosomal subunit protein uL4 (206 aa).

Residues 47 to 75 (GTQSAKTRAEVSGGGIKPWRQKGTGRARQ) are disordered.

The protein belongs to the universal ribosomal protein uL4 family. As to quaternary structure, part of the 50S ribosomal subunit.

Its function is as follows. One of the primary rRNA binding proteins, this protein initially binds near the 5'-end of the 23S rRNA. It is important during the early stages of 50S assembly. It makes multiple contacts with different domains of the 23S rRNA in the assembled 50S subunit and ribosome. In terms of biological role, forms part of the polypeptide exit tunnel. This chain is Large ribosomal subunit protein uL4, found in Clostridium botulinum (strain ATCC 19397 / Type A).